Reading from the N-terminus, the 147-residue chain is Small ribosomal subunit protein uS5 (147 aa).

The 64-residue stretch at 9 to 72 (FEEVIVDIGR…DDAFKNIVEV (64 aa)) folds into the S5 DRBM domain.

It belongs to the universal ribosomal protein uS5 family. Part of the 30S ribosomal subunit. Contacts proteins S4 and S8.

Its function is as follows. With S4 and S12 plays an important role in translational accuracy. Functionally, located at the back of the 30S subunit body where it stabilizes the conformation of the head with respect to the body. The sequence is that of Small ribosomal subunit protein uS5 from Campylobacter fetus subsp. fetus (strain 82-40).